Here is a 1405-residue protein sequence, read N- to C-terminus: MKLKRTAYLLFLYLSSSLLICIKNSFCNKNNTRCLSGPCQNNSTCKHFPQDNNCCLDTANNLDKDCEDLKDPCFSSPCQGIATCVKIPGEGNFLCQCPPGYSGLNCETATNSCGGNLCQHGGTCRKDPEHPVCICPPGYAGRFCETDHNECASSPCHNGAMCQDGINGYSCFCVPGYQGRHCDLEVDECVSDPCKNEAVCLNEIGRYTCVCPQEFSGVNCELEIDECRSQPCLHGATCQDAPGGYSCDCAPGFLGEHCELSVNECESQPCLHGGLCVDGRNSYHCDCTGSGFTGMHCESLIPLCWSKPCHNDATCEDTVDSYICHCRPGYTGALCETDINECSSNPCQFWGECVELSSEGLYGNTAGLPSSFSYVGASGYVCICQPGFTGIHCEEDVDECLLHPCLNGGTCENLPGNYACHCPFDDTSRTFYGGENCSEILLGCTHHQCLNNGKCIPHFQNGQHGFTCQCLSGYAGPLCETVTTLSFGSNGFLWVTSGSHTGIGPECNISLRFHTVQPNALLLIRGNKDVSMKLELLNGCVHLSIEVWNQLKVLLSISHNTSDGEWHFVEVTIAETLTLALVGGSCKEKCTTKSSVPVENHQSICALQDSFLGGLPMGTANNSVSVLNIYNVPSTPSFVGCLQDIRFDLNHITLENVSSGLSSNVKAGCLGKDWCESQPCQNRGRCINLWQGYQCECDRPYTGSNCLKEYVAGRFGQDDSTGYAAFSVNDNYGQNFSLSMFVRTRQPLGLLLALENSTYQYVSVWLEHGSLALQTPGSPKFMVNFFLSDGNVHLISLRIKPNEIELYQSSQNLGFISVPTWTIRRGDVIFIGGLPDREKTEVYGGFFKGCVQDVRLNSQTLEFFPNSTNNAYDDPILVNVTQGCPGDNTCKSNPCHNGGVCHSLWDDFSCSCPTNTAGRACEQVQWCQLSPCPPTAECQLLPQGFECIANAVFSGLSREILFRSNGNITRELTNITFAFRTHDTNVMILHAEKEPEFLNISIQDARLFFQLRSGNSFYTLHLMGSQLVNDGTWHQVTFSMIDPVAQTSRWQMEVNDQTPFVISEVATGSLNFLKDNTDIYVGDQSVDNPKGLQGCLSTIEIGGIYLSYFENLHGFPGKPQEEQFLKVSTNMVLTGCLPSNACHSSPCLHGGNCEDSYSSYRCACLSGWSGTHCEINIDECFSSPCIHGNCSDGVAAYHCRCEPGYTGVNCEVDVDNCKSHQCANGATCVPEAHGYSCLCFGNFTGRFCRHSRLPSTVCGNEKRNFTCYNGGSCSMFQEDWQCMCWPGFTGEWCEEDINECASDPCINGGLCRDLVNRFLCICDVAFAGERCELDLADDRLLGIFTAVGSGTLALFFILLLAGVASLIASNKRATQGTYSPSGQEKAGPRVEMWIRMPPPALERLI.

Residues 1-27 (MKLKRTAYLLFLYLSSSLLICIKNSFC) form the signal peptide. Residues 28 to 1339 (NKNNTRCLSG…RCELDLADDR (1312 aa)) are Extracellular-facing. The EGF-like 1; atypical domain occupies 30 to 67 (NNTRCLSGPCQNNSTCKHFPQDNNCCLDTANNLDKDCE). 33 disulfide bridges follow: cysteine 34-cysteine 45, cysteine 39-cysteine 54, cysteine 55-cysteine 66, cysteine 73-cysteine 84, cysteine 78-cysteine 95, cysteine 97-cysteine 106, cysteine 113-cysteine 124, cysteine 118-cysteine 133, cysteine 135-cysteine 144, cysteine 151-cysteine 162, cysteine 156-cysteine 171, cysteine 173-cysteine 182, cysteine 189-cysteine 200, cysteine 194-cysteine 209, cysteine 211-cysteine 220, cysteine 227-cysteine 238, cysteine 232-cysteine 247, cysteine 249-cysteine 258, cysteine 265-cysteine 276, cysteine 270-cysteine 285, cysteine 287-cysteine 297, cysteine 304-cysteine 315, cysteine 309-cysteine 324, cysteine 326-cysteine 335, cysteine 342-cysteine 353, cysteine 347-cysteine 382, cysteine 384-cysteine 393, cysteine 400-cysteine 411, cysteine 405-cysteine 420, cysteine 422-cysteine 437, cysteine 444-cysteine 455, cysteine 449-cysteine 468, and cysteine 470-cysteine 479. N-linked (GlcNAc...) asparagine glycosylation is present at asparagine 41. EGF-like domains follow at residues 69–107 (LKDP…LNCE) and 109–145 (ATNS…RFCE). In terms of domain architecture, EGF-like 4; calcium-binding spans 147–183 (DHNECASSPCHNGAMCQDGINGYSCFCVPGYQGRHCD). The region spanning 185–221 (EVDECVSDPCKNEAVCLNEIGRYTCVCPQEFSGVNCE) is the EGF-like 5; calcium-binding domain. The 37-residue stretch at 223 to 259 (EIDECRSQPCLHGATCQDAPGGYSCDCAPGFLGEHCE) folds into the EGF-like 6; calcium-binding domain. 5 consecutive EGF-like domains span residues 261–298 (SVNE…MHCE), 300–336 (LIPL…ALCE), 338–394 (DINE…IHCE), 396–438 (DVDE…ENCS), and 440–480 (ILLG…PLCE). The Laminin G-like 1 domain occupies 482–669 (VTTLSFGSNG…GLSSNVKAGC (188 aa)). 2 N-linked (GlcNAc...) asparagine glycosylation sites follow: asparagine 560 and asparagine 656. 4 disulfide bridges follow: cysteine 641–cysteine 669, cysteine 675–cysteine 686, cysteine 680–cysteine 695, and cysteine 697–cysteine 706. Residues 671–707 (GKDWCESQPCQNRGRCINLWQGYQCECDRPYTGSNCL) form the EGF-like 12 domain. One can recognise a Laminin G-like 2 domain in the interval 713-884 (GRFGQDDSTG…PILVNVTQGC (172 aa)). Residues asparagine 756 and asparagine 879 are each glycosylated (N-linked (GlcNAc...) asparagine). Disulfide bonds link cysteine 850–cysteine 884, cysteine 890–cysteine 901, cysteine 895–cysteine 910, cysteine 912–cysteine 921, cysteine 927–cysteine 938, and cysteine 932–cysteine 947. EGF-like domains are found at residues 886–922 (GDNT…RACE) and 923–959 (QVQW…LSRE). Residues 950–1136 (NAVFSGLSRE…VSTNMVLTGC (187 aa)) form the Laminin G-like 3 domain. N-linked (GlcNAc...) asparagine glycans are attached at residues asparagine 967, asparagine 974, and asparagine 999. 16 disulfide bridges follow: cysteine 1095/cysteine 1136, cysteine 1142/cysteine 1153, cysteine 1147/cysteine 1162, cysteine 1164/cysteine 1173, cysteine 1180/cysteine 1190, cysteine 1185/cysteine 1199, cysteine 1201/cysteine 1210, cysteine 1217/cysteine 1228, cysteine 1222/cysteine 1237, cysteine 1239/cysteine 1248, cysteine 1258/cysteine 1273, cysteine 1267/cysteine 1282, cysteine 1284/cysteine 1293, cysteine 1300/cysteine 1311, cysteine 1305/cysteine 1320, and cysteine 1322/cysteine 1331. One can recognise an EGF-like 15 domain in the interval 1138-1174 (PSNACHSSPCLHGGNCEDSYSSYRCACLSGWSGTHCE). The EGF-like 16; calcium-binding domain occupies 1176–1211 (NIDECFSSPCIHGNCSDGVAAYHCRCEPGYTGVNCE). Asparagine 1189 carries N-linked (GlcNAc...) asparagine glycosylation. EGF-like domains follow at residues 1213-1249 (DVDN…RFCR) and 1254-1294 (PSTV…EWCE). 2 N-linked (GlcNAc...) asparagine glycosylation sites follow: asparagine 1242 and asparagine 1264. The 37-residue stretch at 1296-1332 (DINECASDPCINGGLCRDLVNRFLCICDVAFAGERCE) folds into the EGF-like 19; calcium-binding domain. A helical membrane pass occupies residues 1340 to 1360 (LLGIFTAVGSGTLALFFILLL). Topologically, residues 1361 to 1405 (AGVASLIASNKRATQGTYSPSGQEKAGPRVEMWIRMPPPALERLI) are cytoplasmic.

The protein belongs to the Crumbs protein family. Component of a complex composed of PALS1, CRB1 and EPB41L5. Within the complex, interacts (via intracellular domain) with PALS1 and EPB41L5 (via FERM domain). Forms a complex with MPP4 and PALS1. Interacts with MPDZ/MUPP1 and MPP4. Glycosylated. Expressed in the kidney, lung, stomach and testis. Expressed in the brain. Expressed in the retina of the eye. Expressed in the outer nuclear layer, photoreceptor layer and inner nuclear layer of the retina. Expressed in Mueller cell radial processes in the inner nuclear layer, in apical processes sclerad to the external limiting membrane, and in the subapical region, adjacent to the adherens junction of retinal photoreceptors. In the brain, expressed in the granular layer of the cerebellum, the hippocampal dentate gyrus, the olfactory bulbs, the subventricular region lining the telencephalic ventricles and the rostral migratory stream. In terms of tissue distribution, ubiquitously expressed.

It is found in the apical cell membrane. Its subcellular location is the secreted. The protein localises to the cell projection. The protein resides in the cilium. It localises to the photoreceptor outer segment. It is found in the photoreceptor inner segment. Its subcellular location is the cytoplasm. The protein localises to the cell junction. The protein resides in the focal adhesion. Functionally, plays a role in photoreceptor morphogenesis in the retina. May maintain cell polarization and adhesion. In terms of biological role, may play a role in epidermal tissue morphogenesis. May function in cell attachment for stratified epithelial organization. The protein is Protein crumbs homolog 1 (Crb1) of Mus musculus (Mouse).